Here is a 188-residue protein sequence, read N- to C-terminus: Elongation factor P (188 aa).

Lysine 34 carries the N6-(3,6-diaminohexanoyl)-5-hydroxylysine modification.

This sequence belongs to the elongation factor P family. May be beta-lysylated on the epsilon-amino group of Lys-34 by the combined action of EpmA and EpmB, and then hydroxylated on the C5 position of the same residue by EpmC (if this protein is present). Lysylation is critical for the stimulatory effect of EF-P on peptide-bond formation. The lysylation moiety may extend toward the peptidyltransferase center and stabilize the terminal 3-CCA end of the tRNA. Hydroxylation of the C5 position on Lys-34 may allow additional potential stabilizing hydrogen-bond interactions with the P-tRNA.

It is found in the cytoplasm. It functions in the pathway protein biosynthesis; polypeptide chain elongation. Its function is as follows. Involved in peptide bond synthesis. Alleviates ribosome stalling that occurs when 3 or more consecutive Pro residues or the sequence PPG is present in a protein, possibly by augmenting the peptidyl transferase activity of the ribosome. Modification of Lys-34 is required for alleviation. The chain is Elongation factor P from Aliivibrio fischeri (strain ATCC 700601 / ES114) (Vibrio fischeri).